The following is a 448-amino-acid chain: Tapasin (448 aa).

The first 20 residues, 1 to 20, serve as a signal peptide directing secretion; the sequence is MKSLSLLLAVALGLATAVSA. Residues 21–414 lie on the Lumenal side of the membrane; it reads GPAVIECWFV…LSGPSLEDSI (394 aa). Cysteines 27 and 91 form a disulfide. Asn-253 carries N-linked (GlcNAc...) asparagine glycosylation. Positions 292 to 399 constitute an Ig-like C1-type domain; that stretch reads PKVSLMPATL…PASGRSAEVT (108 aa). Cys-315 and Cys-382 are joined by a disulfide. The helical transmembrane segment at 415 to 435 threads the bilayer; it reads GLFLSAFFLLGLFKALGWAAV. At 436–448 the chain is on the cytoplasmic side; it reads YLSTCKDSKKKAE.

In terms of assembly, heterodimer with PDIA3; disulfide-linked. Obligatory mediator for the interaction between newly assembled MHC class I molecules, calreticulin, PDIA3 and TAP. Up to 4 MHC class I/tapasin complexes bind to 1 TAP. Interacts with HLA-G-B2M complex; this interaction is required for loading of high affinity peptides. On its own or as part of MHC class I peptide loading complex, interacts with ligand-free MR1 or MR1-B2M complex, providing for stable MR1 pools ready for metabolite antigen processing.

Its subcellular location is the endoplasmic reticulum membrane. Its function is as follows. Involved in the association of MHC class I with transporter associated with antigen processing (TAP) and in the assembly of MHC class I with peptide (peptide loading). This Chlorocebus aethiops (Green monkey) protein is Tapasin (TAPBP).